The following is a 785-amino-acid chain: MPPDDRLTAVLPPVRDGDIAPPIDVVRAALEGSPPPKPPPPPPPGRGGGGPSGPGGPSGPGRQFRINWKWVRRGSAIAVAVMVLLPLITFGMAYMIVDVPEPGDIRTPQVSTILASDGSEIARIVPPEGNRVDVKIDQIPVHVRDAVMAAEDRDFYSNPGFSWTGFLRAIKNNLFGGGGLQGGSTITQQYVKNALVGDERSGIGGLIRKAKELVISTKMSGEWSKDAVLQAYLNIIYFGRGAYGISAASKAYFDKPVEQLDVAEGALLAALIQRPSTLDPAVDPEGAADRWNWVLDGMVDIGALSQADRDAQVFPPTVPPDYAFQQNQTTGPNGLIERQVTNELLDLFDINEQTLNTEGLQITTTIDPKAQEAAVDAVDKYLEGQDPDMRAAVVSIDPRTGGIKAYYGGSDANGFDFAQAGLPTGSSFKVFALVAALQQGIGLGYQIDSGPLEVNGIKIGNVEGEGCGTCSIAEALKRSLNTSYYRLMLKLENGPADVAEAAHDAGVAESFPGVEHTLSEDGKGGPPNNGVVLGQYQSRVLDMASAYATLAASGVYHKPHFVEKVVNSSGQVLFDASKEDNGEERIDKAVADNVTSAMQPIAGWSRGHNLAGGRPSAAKTGTVQLGDTGDNRDAWMVGYTPSLSTAVWVGTTEGVKPLVNKWGSPIYGSGLPSDIWKATMDGALEGTDVESFPKPTEIGGYAGVPQAPAAPPPSAGPPTDPGQPSVTVIQPTIEVAPGITIPIGPPTTVPVGPPPGAPGAPVGPGAPEVPVAPGAPGVPGAPPPP.

The disordered stretch occupies residues Met-1–Gly-61. A compositionally biased stretch (pro residues) spans Ser-33–Gly-45. A compositionally biased stretch (gly residues) spans Arg-46–Gly-59. The helical transmembrane segment at Ile-77–Val-97 threads the bilayer. Residues Gly-118–Val-299 form a transglycosylase region. Residue Glu-151 is the Proton donor; for transglycosylase activity of the active site. Positions Ala-392 to Trp-662 are transpeptidase. The active-site Acyl-ester intermediate; for transpeptidase activity is the Ser-426. Disordered stretches follow at residues Ser-605 to Gly-626, Glu-690 to Val-726, and Gly-738 to Pro-785. Composition is skewed to pro residues over residues Pro-708–Pro-721 and Ile-743–Pro-758. The segment covering Gly-759–Ala-775 has biased composition (low complexity).

It localises to the cell membrane. It catalyses the reaction [GlcNAc-(1-&gt;4)-Mur2Ac(oyl-L-Ala-gamma-D-Glu-L-Lys-D-Ala-D-Ala)](n)-di-trans,octa-cis-undecaprenyl diphosphate + beta-D-GlcNAc-(1-&gt;4)-Mur2Ac(oyl-L-Ala-gamma-D-Glu-L-Lys-D-Ala-D-Ala)-di-trans,octa-cis-undecaprenyl diphosphate = [GlcNAc-(1-&gt;4)-Mur2Ac(oyl-L-Ala-gamma-D-Glu-L-Lys-D-Ala-D-Ala)](n+1)-di-trans,octa-cis-undecaprenyl diphosphate + di-trans,octa-cis-undecaprenyl diphosphate + H(+). The catalysed reaction is Preferential cleavage: (Ac)2-L-Lys-D-Ala-|-D-Ala. Also transpeptidation of peptidyl-alanyl moieties that are N-acyl substituents of D-alanine.. The protein operates within cell wall biogenesis; peptidoglycan biosynthesis. In terms of biological role, cell wall formation. Synthesis of cross-linked peptidoglycan from the lipid intermediates. The enzyme has a penicillin-insensitive transglycosylase N-terminal domain (formation of linear glycan strands) and a penicillin-sensitive transpeptidase C-terminal domain (cross-linking of the peptide subunits). The protein is Penicillin-binding protein 1A (ponA1) of Mycolicibacterium smegmatis (strain ATCC 700084 / mc(2)155) (Mycobacterium smegmatis).